The sequence spans 139 residues: D-ribose pyranase (139 aa).

The active-site Proton donor is the His20. Residues Asp28, His106, and 128–130 (YAN) contribute to the substrate site.

This sequence belongs to the RbsD / FucU family. RbsD subfamily. In terms of assembly, homodecamer.

It is found in the cytoplasm. It carries out the reaction beta-D-ribopyranose = beta-D-ribofuranose. Its pathway is carbohydrate metabolism; D-ribose degradation; D-ribose 5-phosphate from beta-D-ribopyranose: step 1/2. Functionally, catalyzes the interconversion of beta-pyran and beta-furan forms of D-ribose. The chain is D-ribose pyranase from Salmonella arizonae (strain ATCC BAA-731 / CDC346-86 / RSK2980).